A 120-amino-acid chain; its full sequence is Insoluble matrix shell protein 2 (120 aa).

Positions 1 to 20 are cleaved as a signal peptide; it reads MHQSSLGVLVLFSLIYLCIS.

As to expression, component of the acid-insoluble organic matrix of the calcified shell.

It localises to the secreted. This is Insoluble matrix shell protein 2 from Ruditapes philippinarum (Japanese carpet shell).